The chain runs to 305 residues: UDP-3-O-acyl-N-acetylglucosamine deacetylase (305 aa).

Residues histidine 79, histidine 238, and aspartate 242 each coordinate Zn(2+). The active-site Proton donor is the histidine 265.

It belongs to the LpxC family. Zn(2+) serves as cofactor.

The enzyme catalyses a UDP-3-O-[(3R)-3-hydroxyacyl]-N-acetyl-alpha-D-glucosamine + H2O = a UDP-3-O-[(3R)-3-hydroxyacyl]-alpha-D-glucosamine + acetate. It participates in glycolipid biosynthesis; lipid IV(A) biosynthesis; lipid IV(A) from (3R)-3-hydroxytetradecanoyl-[acyl-carrier-protein] and UDP-N-acetyl-alpha-D-glucosamine: step 2/6. Catalyzes the hydrolysis of UDP-3-O-myristoyl-N-acetylglucosamine to form UDP-3-O-myristoylglucosamine and acetate, the committed step in lipid A biosynthesis. The protein is UDP-3-O-acyl-N-acetylglucosamine deacetylase of Citrobacter koseri (strain ATCC BAA-895 / CDC 4225-83 / SGSC4696).